Consider the following 96-residue polypeptide: MIHKLTSEERATQIAALHGWQAATGRDAIQRQFKFADFNEAFGFMTRVAIKAQEMDHHPEWFNVYDKVEITLSTHEANGVTERDIRLAAFIDSITA.

The protein belongs to the pterin-4-alpha-carbinolamine dehydratase family.

The enzyme catalyses (4aS,6R)-4a-hydroxy-L-erythro-5,6,7,8-tetrahydrobiopterin = (6R)-L-erythro-6,7-dihydrobiopterin + H2O. This Paraburkholderia xenovorans (strain LB400) protein is Putative pterin-4-alpha-carbinolamine dehydratase.